The following is a 392-amino-acid chain: Protein NolC (392 aa).

Residues 2 to 71 (KRDLYETLGV…RAAYDRYGHA (70 aa)) form the J domain. Disordered stretches follow at residues 103–142 (RRDDGRRSSAPLLGRSRTRCGPSLQHGDHPRGGLFRQDGA) and 157–244 (LGRE…TGLR). The span at 157-170 (LGREAGHQPEDLRH) shows a compositional bias: basic and acidic residues. Positions 171–185 (LPGLRPYPRRPGLLL) are enriched in low complexity. Over residues 186-203 (DRTHLPDLRRSRSDDHRS) the composition is skewed to basic and acidic residues. Residues 227–241 (HRGRHAYPPLRRGRT) show a composition bias toward basic residues.

The protein is Protein NolC (nolC) of Rhizobium fredii (Sinorhizobium fredii).